The primary structure comprises 353 residues: Photosystem II D2 protein (353 aa).

T2 is modified (N-acetylthreonine). Position 2 is a phosphothreonine (T2). Residues C41–T61 form a helical membrane-spanning segment. Position 118 (H118) interacts with chlorophyll a. A helical membrane pass occupies residues G125–P141. Residues Q130 and N143 each coordinate pheophytin a. A helical membrane pass occupies residues V153–S166. H198 lines the chlorophyll a pocket. The chain crosses the membrane as a helical span at residues A208–D228. Positions 215 and 262 each coordinate a plastoquinone. H215 lines the Fe cation pocket. H269 lines the Fe cation pocket. A helical membrane pass occupies residues G279 to R295.

The protein belongs to the reaction center PufL/M/PsbA/D family. As to quaternary structure, PSII is composed of 1 copy each of membrane proteins PsbA, PsbB, PsbC, PsbD, PsbE, PsbF, PsbH, PsbI, PsbJ, PsbK, PsbL, PsbM, PsbT, PsbX, PsbY, PsbZ, Psb30/Ycf12, at least 3 peripheral proteins of the oxygen-evolving complex and a large number of cofactors. It forms dimeric complexes. The D1/D2 heterodimer binds P680, chlorophylls that are the primary electron donor of PSII, and subsequent electron acceptors. It shares a non-heme iron and each subunit binds pheophytin, quinone, additional chlorophylls, carotenoids and lipids. There is also a Cl(-1) ion associated with D1 and D2, which is required for oxygen evolution. The PSII complex binds additional chlorophylls, carotenoids and specific lipids. serves as cofactor.

The protein localises to the plastid. The protein resides in the chloroplast thylakoid membrane. It carries out the reaction 2 a plastoquinone + 4 hnu + 2 H2O = 2 a plastoquinol + O2. Photosystem II (PSII) is a light-driven water:plastoquinone oxidoreductase that uses light energy to abstract electrons from H(2)O, generating O(2) and a proton gradient subsequently used for ATP formation. It consists of a core antenna complex that captures photons, and an electron transfer chain that converts photonic excitation into a charge separation. The D1/D2 (PsbA/PsbD) reaction center heterodimer binds P680, the primary electron donor of PSII as well as several subsequent electron acceptors. D2 is needed for assembly of a stable PSII complex. This Cucumis sativus (Cucumber) protein is Photosystem II D2 protein.